A 465-amino-acid polypeptide reads, in one-letter code: Soluble pyridine nucleotide transhydrogenase (465 aa).

36-45 contributes to the FAD binding site; it reads ERYDNVGGGC.

The protein belongs to the class-I pyridine nucleotide-disulfide oxidoreductase family. It depends on FAD as a cofactor.

It localises to the cytoplasm. The enzyme catalyses NAD(+) + NADPH = NADH + NADP(+). Functionally, conversion of NADPH, generated by peripheral catabolic pathways, to NADH, which can enter the respiratory chain for energy generation. The protein is Soluble pyridine nucleotide transhydrogenase of Sodalis glossinidius (strain morsitans).